Here is an 825-residue protein sequence, read N- to C-terminus: Lon protease (825 aa).

The Lon N-terminal domain occupies 41-237; the sequence is LPIIFIPNTI…KVIQLLLEQK (197 aa). 388-395 serves as a coordination point for ATP; that stretch reads GPPGTGKT. One can recognise a Lon proteolytic domain in the interval 625–805; it reads SNPPGVVTGL…DEVLYEALGL (181 aa). Catalysis depends on residues S711 and K754.

This sequence belongs to the peptidase S16 family. In terms of assembly, homohexamer. Organized in a ring with a central cavity.

The protein resides in the cytoplasm. The enzyme catalyses Hydrolysis of proteins in presence of ATP.. In terms of biological role, ATP-dependent serine protease that mediates the selective degradation of mutant and abnormal proteins as well as certain short-lived regulatory proteins. Required for cellular homeostasis and for survival from DNA damage and developmental changes induced by stress. Degrades polypeptides processively to yield small peptide fragments that are 5 to 10 amino acids long. Binds to DNA in a double-stranded, site-specific manner. The sequence is that of Lon protease from Methanosphaera stadtmanae (strain ATCC 43021 / DSM 3091 / JCM 11832 / MCB-3).